A 133-amino-acid polypeptide reads, in one-letter code: Mediator of RNA polymerase II transcription subunit 10 (133 aa).

The span at 1–13 (MSTEASTGETPEF) shows a compositional bias: polar residues. A disordered region spans residues 1–28 (MSTEASTGETPEFQSYDHRGSPTQEAMK). Positions 15–28 (SYDHRGSPTQEAMK) are enriched in basic and acidic residues.

This sequence belongs to the Mediator complex subunit 10 family. As to quaternary structure, component of the Mediator complex.

Its subcellular location is the nucleus. In terms of biological role, component of the Mediator complex, a coactivator involved in the regulated transcription of nearly all RNA polymerase II-dependent genes. Mediator functions as a bridge to convey information from gene-specific regulatory proteins to the basal RNA polymerase II transcription machinery. Mediator is recruited to promoters by direct interactions with regulatory proteins and serves as a scaffold for the assembly of a functional preinitiation complex with RNA polymerase II and the general transcription factors. The chain is Mediator of RNA polymerase II transcription subunit 10 (NUT2) from Phaeosphaeria nodorum (strain SN15 / ATCC MYA-4574 / FGSC 10173) (Glume blotch fungus).